The primary structure comprises 129 residues: Small ribosomal subunit protein uS11 (129 aa).

It belongs to the universal ribosomal protein uS11 family. Part of the 30S ribosomal subunit. Interacts with proteins S7 and S18. Binds to IF-3.

Its function is as follows. Located on the platform of the 30S subunit, it bridges several disparate RNA helices of the 16S rRNA. Forms part of the Shine-Dalgarno cleft in the 70S ribosome. The sequence is that of Small ribosomal subunit protein uS11 from Oleidesulfovibrio alaskensis (strain ATCC BAA-1058 / DSM 17464 / G20) (Desulfovibrio alaskensis).